A 1227-amino-acid chain; its full sequence is RNA-binding protein 20 (1227 aa).

Disordered regions lie at residues 1–58 (MVLA…QAGL) and 289–374 (GSHV…SKQG). Residues 27 to 42 (PGARASPAPSGPRGMQ) show a composition bias toward low complexity. Residues 43-56 (QPPPPPQPPPPPQA) are compositionally biased toward pro residues. Over residues 313-331 (QGTNSQWESPHGFSGQSKP) the composition is skewed to polar residues. Residues 409-443 (HLPHICSICDKKVFDLKDWELHVKGKLHAQKCLVF) form a U1-type zinc finger. S498 is subject to Phosphoserine. The RRM domain occupies 518–593 (RVVHICNLPE…EKLLIRMSKR (76 aa)). Residues 624–634 (EADRYGPERPR) show a composition bias toward basic and acidic residues. Disordered stretches follow at residues 624–906 (EADR…TNME) and 977–1089 (SLKS…ASPP). Residues 628-655 (YGPERPRSRSPVSRSLSPRSHTPSFTSC) form an RS region. Phosphoserine occurs at positions 635, 637, 640, 642, 660, and 679. A compositionally biased stretch (low complexity) spans 636 to 660 (RSPVSRSLSPRSHTPSFTSCSSSHS). Basic and acidic residues-rich tracts occupy residues 674 to 709 (DSWEHSPYARREEERDPAPWRDNGDDKRDRMDPWAH) and 716 to 738 (RQLDKAELDERPEGGRPHREKYP). The span at 741–752 (GSPNLPHSVSSY) shows a compositional bias: polar residues. At S742 the chain carries Phosphoserine. 3 stretches are compositionally biased toward basic and acidic residues: residues 753–772 (KSREDGYYRKEPKAKSDKYL), 784–807 (RKDEARLRESRHPHPDDSGKEDGL), and 816–856 (EGAK…KEEQ). S801 is subject to Phosphoserine. 7 positions are modified to phosphoserine: S865, S876, S891, S893, S977, S980, and S1013. The segment covering 868–888 (RQEKEAEFSDPENTRTKKEQD) has biased composition (basic and acidic residues). Residues 1024–1036 (CYEKEAKGVESSD) are compositionally biased toward basic and acidic residues. Residues S1048, S1060, S1080, S1115, and S1120 each carry the phosphoserine modification. The Matrin-type zinc-finger motif lies at 1161 to 1192 (FYCKLCGLFYTSEETAKMSHCRSAVHYRNLQK). Residues 1201–1215 (GLKETEGADSPRPED) are compositionally biased toward basic and acidic residues. The interval 1201-1227 (GLKETEGADSPRPEDSGIVPRFERKKL) is disordered. S1210 is subject to Phosphoserine.

In terms of assembly, associates with components of the U1 and U2 U1 small nuclear ribonucleoprotein complexes. Post-translationally, phosphorylation regulates the subcellular localization. Phosphorylation of Ser-635 and Ser-637 in the RS (arginine/serine-rich) region promotes nuclear localization of the protein. In contrast, phosphorylation of the C-terminal disordered region promotes localization to cytoplasmic ribonucleoprotein granules. In terms of tissue distribution, mainly expressed in the heart. Also expressed in skeletal muscle tissues, ovary, small intestine and colon.

Its subcellular location is the nucleus. The protein localises to the cytoplasm. It localises to the cytoplasmic ribonucleoprotein granule. Functionally, RNA-binding protein that acts as a regulator of mRNA splicing of a subset of genes encoding key structural proteins involved in cardiac development, such as TTN (Titin), CACNA1C, CAMK2D or PDLIM5/ENH. Acts as a repressor of mRNA splicing: specifically binds the 5'UCUU-3' motif that is predominantly found within intronic sequences of pre-mRNAs, leading to the exclusion of specific exons in target transcripts. RBM20-mediated exon skipping is hormone-dependent and is essential for TTN isoform transition in both cardiac and skeletal muscles. RBM20-mediated exon skipping of TTN provides substrates for the formation of circular RNA (circRNAs) from the TTN transcripts. Together with RBM24, promotes the expression of short isoforms of PDLIM5/ENH in cardiomyocytes. The protein is RNA-binding protein 20 of Homo sapiens (Human).